The sequence spans 674 residues: Ribosome biogenesis protein BOP1 homolog (674 aa).

The tract at residues 1–28 (MASTSAATPLKNKRKFENGKKKPKTLKD) is disordered. The span at 15–28 (KFENGKKKPKTLKD) shows a compositional bias: basic and acidic residues. 7 WD repeats span residues 342–384 (GHTG…KTFQ), 386–425 (DGEVTSVSFSPVADRTLLAVAYEGKYVAILNTGCGDRLHV), 427–458 (QTEALLAETPTDAQEDGAVVTWRKSKEKLMLK), 459–500 (MPNE…SQCP), 503–541 (KRKGHVQAVTFHPTQARLFVATKIHVREYDLARCVLVKK), 587–626 (HHTAAVRSVAYHKKYPLLATVSDDGTAMVYYARIYTDFVK), and 643–674 (PNDLCMLHTTWHPTQPWLITAGADGTIALFTY).

The protein belongs to the WD repeat BOP1/ERB1 family.

The protein localises to the nucleus. It localises to the nucleolus. The protein resides in the nucleoplasm. Its function is as follows. Required for maturation of ribosomal RNAs and formation of the large ribosomal subunit. This Caenorhabditis elegans protein is Ribosome biogenesis protein BOP1 homolog.